The primary structure comprises 500 residues: Probable zinc metalloprotease MGYG_02393 (500 aa).

An N-terminal signal peptide occupies residues 1–24 (MHLSMGGLLPGLALLASANALALA). 3 N-linked (GlcNAc...) asparagine glycosylation sites follow: N61, N103, and N124. Positions 174, 194, and 230 each coordinate Zn(2+). The N-linked (GlcNAc...) asparagine glycan is linked to N245. Residue D257 participates in Zn(2+) binding. The 87-residue stretch at 414–500 (MPRNVRVNTS…ERGVAVLPFP (87 aa)) folds into the Fibronectin type-III domain. N-linked (GlcNAc...) asparagine glycans are attached at residues N421 and N427.

Belongs to the peptidase M28 family. M28B subfamily. It depends on Zn(2+) as a cofactor.

It is found in the secreted. This chain is Probable zinc metalloprotease MGYG_02393, found in Arthroderma gypseum (strain ATCC MYA-4604 / CBS 118893) (Microsporum gypseum).